We begin with the raw amino-acid sequence, 775 residues long: Endothelin-converting enzyme-like 1 (775 aa).

Residues 1–61 (MEAPYSMTAH…LPRWNRREVC (61 aa)) are Cytoplasmic-facing. A disordered region spans residues 30 to 52 (GTSLPPGFPRGSGRSASGSRSGL). Low complexity predominate over residues 32 to 52 (SLPPGFPRGSGRSASGSRSGL). Residues 62-82 (LLSGLVFAAGLCAILAAMLAL) traverse the membrane as a helical; Signal-anchor for type II membrane protein segment. At 83–775 (KYLGPGAAGG…MNPVHKCSVW (693 aa)) the chain is on the lumenal side. The Peptidase M13 domain occupies 99-775 (GCPERKAFAR…MNPVHKCSVW (677 aa)). Intrachain disulfides connect Cys-124/Cys-760, Cys-132/Cys-720, Cys-188/Cys-441, and Cys-649/Cys-772. Asn-255 and Asn-322 each carry an N-linked (GlcNAc...) asparagine glycan. His-612 serves as a coordination point for Zn(2+). Residue Glu-613 is part of the active site. Position 616 (His-616) interacts with Zn(2+). The N-linked (GlcNAc...) asparagine glycan is linked to Asn-656. Glu-672 contributes to the Zn(2+) binding site. Asp-676 functions as the Proton donor in the catalytic mechanism.

It belongs to the peptidase M13 family. Requires Zn(2+) as cofactor.

It is found in the membrane. May contribute to the degradation of peptide hormones and be involved in the inactivation of neuronal peptides. This Mus musculus (Mouse) protein is Endothelin-converting enzyme-like 1 (Ecel1).